Consider the following 450-residue polypeptide: MSTHVTFDYSKALSFIGEHEITYLRDAVKVTHHAIHEKTGAGNDFLGWVDLPLQYDKEEFARIQKCAEKIKNDSDILLVVGIGGSYLGARAAIEMLNHSFYNTLSKEQRKTPQVLFVGQNISSTYMKDLMDVLEGKDFSINVISKSGTTTEPALAFRIFRKLLEEKYGKEEARKRIYATTDKARGALKTLADNEGYETFVIPDDVGGRFSVLTPVGLLPIAVSGLNIEEMMKGAAAGRDDFGTSELEENPAYQYAVVRNALYNKGKTIEMLINYEPALQYFAEWWKQLFGESEGKDQKGIFPSSANFSTDLHSLGQYVQEGRRDLFETVLKVGKSTHELTIESEENDLDGLNYLAGETVDFVNTKAYEGTLLAHSDGGVPNLIVNIPELNEYTFGYLVYFFEKACAMSGYLLGVNPFDQPGVEAYKKNMFALLGKPGFEELKAELEERLK.

A Phosphothreonine modification is found at Thr39. The Proton donor role is filled by Glu291. Active-site residues include His312 and Lys426.

The protein belongs to the GPI family.

The protein localises to the cytoplasm. It carries out the reaction alpha-D-glucose 6-phosphate = beta-D-fructose 6-phosphate. Its pathway is carbohydrate biosynthesis; gluconeogenesis. It participates in carbohydrate degradation; glycolysis; D-glyceraldehyde 3-phosphate and glycerone phosphate from D-glucose: step 2/4. Catalyzes the reversible isomerization of glucose-6-phosphate to fructose-6-phosphate. This chain is Glucose-6-phosphate isomerase, found in Bacillus anthracis.